Reading from the N-terminus, the 434-residue chain is Histidinol dehydrogenase (434 aa).

Residues tyrosine 130, glutamine 192, and asparagine 215 each coordinate NAD(+). Residues serine 238, glutamine 260, and histidine 263 each contribute to the substrate site. Glutamine 260 and histidine 263 together coordinate Zn(2+). Catalysis depends on proton acceptor residues glutamate 328 and histidine 329. Substrate is bound by residues histidine 329, aspartate 362, glutamate 416, and histidine 421. A Zn(2+)-binding site is contributed by aspartate 362. Zn(2+) is bound at residue histidine 421.

This sequence belongs to the histidinol dehydrogenase family. The cofactor is Zn(2+).

The enzyme catalyses L-histidinol + 2 NAD(+) + H2O = L-histidine + 2 NADH + 3 H(+). It participates in amino-acid biosynthesis; L-histidine biosynthesis; L-histidine from 5-phospho-alpha-D-ribose 1-diphosphate: step 9/9. In terms of biological role, catalyzes the sequential NAD-dependent oxidations of L-histidinol to L-histidinaldehyde and then to L-histidine. This Synechococcus sp. (strain ATCC 27144 / PCC 6301 / SAUG 1402/1) (Anacystis nidulans) protein is Histidinol dehydrogenase.